We begin with the raw amino-acid sequence, 478 residues long: Glycogen synthase (478 aa).

ADP-alpha-D-glucose is bound at residue Lys-15.

This sequence belongs to the glycosyltransferase 1 family. Bacterial/plant glycogen synthase subfamily.

The catalysed reaction is [(1-&gt;4)-alpha-D-glucosyl](n) + ADP-alpha-D-glucose = [(1-&gt;4)-alpha-D-glucosyl](n+1) + ADP + H(+). Its pathway is glycan biosynthesis; glycogen biosynthesis. Synthesizes alpha-1,4-glucan chains using ADP-glucose. This is Glycogen synthase from Actinobacillus pleuropneumoniae serotype 5b (strain L20).